The primary structure comprises 242 residues: DNA repair protein RecO (242 aa).

This sequence belongs to the RecO family. In terms of assembly, monomer.

Functionally, involved in DNA repair and RecF pathway recombination. The protein is DNA repair protein RecO of Shigella flexneri.